The sequence spans 104 residues: Large ribosomal subunit protein bL21 (104 aa).

It belongs to the bacterial ribosomal protein bL21 family. As to quaternary structure, part of the 50S ribosomal subunit. Contacts protein L20.

In terms of biological role, this protein binds to 23S rRNA in the presence of protein L20. The sequence is that of Large ribosomal subunit protein bL21 from Rhodopirellula baltica (strain DSM 10527 / NCIMB 13988 / SH1).